The following is a 347-amino-acid chain: Heat-inducible transcription repressor HrcA (347 aa).

The protein belongs to the HrcA family.

In terms of biological role, negative regulator of class I heat shock genes (grpE-dnaK-dnaJ and groELS operons). Prevents heat-shock induction of these operons. In Mycoplasmopsis pulmonis (strain UAB CTIP) (Mycoplasma pulmonis), this protein is Heat-inducible transcription repressor HrcA.